Reading from the N-terminus, the 353-residue chain is 3-isopropylmalate dehydrogenase (353 aa).

Position 73-86 (73-86 (GPQYDTLDRPLRPE)) interacts with NAD(+). Residues arginine 93, arginine 103, arginine 131, and aspartate 220 each coordinate substrate. Mg(2+) contacts are provided by aspartate 220, aspartate 244, and aspartate 248. Residue 278-290 (GSAPDIAGKNLAN) coordinates NAD(+).

It belongs to the isocitrate and isopropylmalate dehydrogenases family. LeuB type 1 subfamily. As to quaternary structure, homodimer. Mg(2+) is required as a cofactor. Mn(2+) serves as cofactor.

The protein localises to the cytoplasm. It carries out the reaction (2R,3S)-3-isopropylmalate + NAD(+) = 4-methyl-2-oxopentanoate + CO2 + NADH. Its pathway is amino-acid biosynthesis; L-leucine biosynthesis; L-leucine from 3-methyl-2-oxobutanoate: step 3/4. Functionally, catalyzes the oxidation of 3-carboxy-2-hydroxy-4-methylpentanoate (3-isopropylmalate) to 3-carboxy-4-methyl-2-oxopentanoate. The product decarboxylates to 4-methyl-2 oxopentanoate. This is 3-isopropylmalate dehydrogenase from Thiobacillus denitrificans (strain ATCC 25259 / T1).